We begin with the raw amino-acid sequence, 561 residues long: Asparagine synthetase [glutamine-hydrolyzing] (561 aa).

The active-site For GATase activity is C2. Residues 2-191 (CGIWALFGSD…PGHYEVLDLK (190 aa)) form the Glutamine amidotransferase type-2 domain. Residues 49 to 53 (RLAVV), 75 to 77 (NGE), and D97 each bind L-glutamine. In terms of domain architecture, Asparagine synthetase spans 213–536 (HALYDGVEKL…PGRADWLPHY (324 aa)). Residues L256, I288, and 363–364 (SG) each bind ATP. Residue K385 is modified to N6-acetyllysine. T545 is modified (phosphothreonine).

It catalyses the reaction L-aspartate + L-glutamine + ATP + H2O = L-asparagine + L-glutamate + AMP + diphosphate + H(+). Its pathway is amino-acid biosynthesis; L-asparagine biosynthesis; L-asparagine from L-aspartate (L-Gln route): step 1/1. This is Asparagine synthetase [glutamine-hydrolyzing] (ASNS) from Bos taurus (Bovine).